The chain runs to 377 residues: Nitric oxide reductase FlRd-NAD(+) reductase (377 aa).

Belongs to the FAD-dependent oxidoreductase family. FAD is required as a cofactor.

It is found in the cytoplasm. It carries out the reaction 2 reduced [nitric oxide reductase rubredoxin domain] + NAD(+) + H(+) = 2 oxidized [nitric oxide reductase rubredoxin domain] + NADH. The protein operates within nitrogen metabolism; nitric oxide reduction. Functionally, one of at least two accessory proteins for anaerobic nitric oxide (NO) reductase. Reduces the rubredoxin moiety of NO reductase. This Shigella flexneri serotype 5b (strain 8401) protein is Nitric oxide reductase FlRd-NAD(+) reductase.